A 106-amino-acid chain; its full sequence is NADH dehydrogenase [ubiquinone] 1 beta subcomplex subunit 9 (106 aa).

The protein belongs to the complex I LYR family. As to quaternary structure, complex I is composed of about 45 different subunits.

It localises to the mitochondrion inner membrane. Functionally, accessory subunit of the mitochondrial membrane respiratory chain NADH dehydrogenase (Complex I), that is believed to be not involved in catalysis. Complex I functions in the transfer of electrons from NADH to the respiratory chain. The immediate electron acceptor for the enzyme is believed to be ubiquinone. This chain is NADH dehydrogenase [ubiquinone] 1 beta subcomplex subunit 9 (ndufb9), found in Dictyostelium discoideum (Social amoeba).